A 611-amino-acid polypeptide reads, in one-letter code: UvrABC system protein C (611 aa).

Residues 19 to 97 (QRPGVYRMVD…IKELRPRYNV (79 aa)) enclose the GIY-YIG domain. Positions 207–242 (NQVIEELGARMEAASERLEFEAAAQYRDRIQALQAV) constitute a UVR domain.

The protein belongs to the UvrC family. As to quaternary structure, interacts with UvrB in an incision complex.

Its subcellular location is the cytoplasm. The UvrABC repair system catalyzes the recognition and processing of DNA lesions. UvrC both incises the 5' and 3' sides of the lesion. The N-terminal half is responsible for the 3' incision and the C-terminal half is responsible for the 5' incision. This is UvrABC system protein C from Alkalilimnicola ehrlichii (strain ATCC BAA-1101 / DSM 17681 / MLHE-1).